A 451-amino-acid chain; its full sequence is Bifunctional protein GlmU (451 aa).

The pyrophosphorylase stretch occupies residues 1–225; the sequence is MLEIIILAAG…EYEVLGVNNR (225 aa). Residues 7–10, Lys-21, Gln-72, 77–78, 99–101, Gly-136, Glu-150, Asn-165, and Asn-223 each bind UDP-N-acetyl-alpha-D-glucosamine; these read LAAG, GT, and YGD. Asp-101 serves as a coordination point for Mg(2+). Position 223 (Asn-223) interacts with Mg(2+). The linker stretch occupies residues 226–246; that stretch reads LQQAELERIFQRQVAEELMVA. Residues 247–451 are N-acetyltransferase; sequence GATLLDPARL…IKGWARPVKK (205 aa). The UDP-N-acetyl-alpha-D-glucosamine site is built by Arg-329 and Lys-347. His-359 (proton acceptor) is an active-site residue. UDP-N-acetyl-alpha-D-glucosamine contacts are provided by Tyr-362 and Asn-373. Acetyl-CoA contacts are provided by residues Ala-376, 382–383, Ser-401, Ala-419, and Arg-436; that span reads NY.

It in the N-terminal section; belongs to the N-acetylglucosamine-1-phosphate uridyltransferase family. The protein in the C-terminal section; belongs to the transferase hexapeptide repeat family. In terms of assembly, homotrimer. Mg(2+) serves as cofactor.

Its subcellular location is the cytoplasm. It carries out the reaction alpha-D-glucosamine 1-phosphate + acetyl-CoA = N-acetyl-alpha-D-glucosamine 1-phosphate + CoA + H(+). It catalyses the reaction N-acetyl-alpha-D-glucosamine 1-phosphate + UTP + H(+) = UDP-N-acetyl-alpha-D-glucosamine + diphosphate. The protein operates within nucleotide-sugar biosynthesis; UDP-N-acetyl-alpha-D-glucosamine biosynthesis; N-acetyl-alpha-D-glucosamine 1-phosphate from alpha-D-glucosamine 6-phosphate (route II): step 2/2. It functions in the pathway nucleotide-sugar biosynthesis; UDP-N-acetyl-alpha-D-glucosamine biosynthesis; UDP-N-acetyl-alpha-D-glucosamine from N-acetyl-alpha-D-glucosamine 1-phosphate: step 1/1. Its pathway is bacterial outer membrane biogenesis; LPS lipid A biosynthesis. Functionally, catalyzes the last two sequential reactions in the de novo biosynthetic pathway for UDP-N-acetylglucosamine (UDP-GlcNAc). The C-terminal domain catalyzes the transfer of acetyl group from acetyl coenzyme A to glucosamine-1-phosphate (GlcN-1-P) to produce N-acetylglucosamine-1-phosphate (GlcNAc-1-P), which is converted into UDP-GlcNAc by the transfer of uridine 5-monophosphate (from uridine 5-triphosphate), a reaction catalyzed by the N-terminal domain. The polypeptide is Bifunctional protein GlmU (Saccharophagus degradans (strain 2-40 / ATCC 43961 / DSM 17024)).